We begin with the raw amino-acid sequence, 66 residues long: U1-theraphotoxin-Cg1a 2 (66 aa).

A signal peptide spans 1–21 (MKTSALFVIFGLVLLFCNSFA). The propeptide occupies 22 to 29 (AELEMTGR). 3 cysteine pairs are disulfide-bonded: C31/C46, C38/C51, and C45/C58. At P63 the chain carries Proline amide.

It belongs to the neurotoxin 10 (Hwtx-1) family. 46 (Jztx-7/10/12) subfamily. In terms of tissue distribution, expressed by the venom gland.

It is found in the secreted. Functionally, probable ion channel inhibitor. In Chilobrachys guangxiensis (Chinese earth tiger tarantula), this protein is U1-theraphotoxin-Cg1a 2.